The chain runs to 206 residues: Thymidylate kinase (206 aa).

11-18 contacts ATP; sequence GIDGAGKT.

It belongs to the thymidylate kinase family.

The enzyme catalyses dTMP + ATP = dTDP + ADP. In terms of biological role, phosphorylation of dTMP to form dTDP in both de novo and salvage pathways of dTTP synthesis. The sequence is that of Thymidylate kinase from Burkholderia mallei (strain NCTC 10247).